We begin with the raw amino-acid sequence, 126 residues long: Small ribosomal subunit protein uS13 (126 aa).

The interval 92–126 (HRRGLPVRGQRTKTNARTRKGPKKTVAGKKKATRK) is disordered.

It belongs to the universal ribosomal protein uS13 family. In terms of assembly, part of the 30S ribosomal subunit. Forms a loose heterodimer with protein S19. Forms two bridges to the 50S subunit in the 70S ribosome.

Functionally, located at the top of the head of the 30S subunit, it contacts several helices of the 16S rRNA. In the 70S ribosome it contacts the 23S rRNA (bridge B1a) and protein L5 of the 50S subunit (bridge B1b), connecting the 2 subunits; these bridges are implicated in subunit movement. Contacts the tRNAs in the A and P-sites. The polypeptide is Small ribosomal subunit protein uS13 (Deinococcus radiodurans (strain ATCC 13939 / DSM 20539 / JCM 16871 / CCUG 27074 / LMG 4051 / NBRC 15346 / NCIMB 9279 / VKM B-1422 / R1)).